Here is a 223-residue protein sequence, read N- to C-terminus: tRNA (guanine-N(7)-)-methyltransferase (223 aa).

The S-adenosyl-L-methionine site is built by D56, D81, D108, and D130. D130 is an active-site residue. Substrate-binding residues include K134 and D166.

This sequence belongs to the class I-like SAM-binding methyltransferase superfamily. TrmB family.

It catalyses the reaction guanosine(46) in tRNA + S-adenosyl-L-methionine = N(7)-methylguanosine(46) in tRNA + S-adenosyl-L-homocysteine. Its pathway is tRNA modification; N(7)-methylguanine-tRNA biosynthesis. In terms of biological role, catalyzes the formation of N(7)-methylguanine at position 46 (m7G46) in tRNA. This is tRNA (guanine-N(7)-)-methyltransferase from Rubrobacter xylanophilus (strain DSM 9941 / JCM 11954 / NBRC 16129 / PRD-1).